The sequence spans 366 residues: Aminomethyltransferase (366 aa).

This sequence belongs to the GcvT family. As to quaternary structure, the glycine cleavage system is composed of four proteins: P, T, L and H.

It catalyses the reaction N(6)-[(R)-S(8)-aminomethyldihydrolipoyl]-L-lysyl-[protein] + (6S)-5,6,7,8-tetrahydrofolate = N(6)-[(R)-dihydrolipoyl]-L-lysyl-[protein] + (6R)-5,10-methylene-5,6,7,8-tetrahydrofolate + NH4(+). Its function is as follows. The glycine cleavage system catalyzes the degradation of glycine. The polypeptide is Aminomethyltransferase (Bacillus cereus (strain ATCC 10987 / NRS 248)).